The chain runs to 290 residues: Homeobox protein EMX1 (290 aa).

The segment at residues proline 192–lysine 251 is a DNA-binding region (homeobox). The segment at arginine 249–aspartate 290 is disordered. The segment covering glutamine 250–lysine 263 has biased composition (basic and acidic residues).

The protein belongs to the EMX homeobox family. In terms of assembly, interacts with WRD11 (via the N-terminal and the central portion of the protein); the interaction associates EMX1 with GLI3. Cerebral cortex.

The protein localises to the nucleus. The protein resides in the cytoplasm. Functionally, transcription factor, which in cooperation with EMX2, acts to generate the boundary between the roof and archipallium in the developing brain. May function in combinations with OTX1/2 to specify cell fates in the developing central nervous system. This Homo sapiens (Human) protein is Homeobox protein EMX1.